Consider the following 846-residue polypeptide: Penicillin G acylase (846 aa).

A signal peptide spans 1–26 (MKNRNRMIVNCVTASLMYYWSLPALA). Glu-178 provides a ligand contact to Ca(2+). Residues 236 to 289 (ALLPRYDLPAPMLDRPAKGADGALLALTAGKNRETIAAQFAQGGANGLAGYPTT) constitute a propeptide, spacer peptide. Residue Ser-290 is the Nucleophile of the active site. Asp-362, Val-364, Asp-365, Pro-494, and Asp-541 together coordinate Ca(2+).

The protein belongs to the peptidase S45 family. As to quaternary structure, heterodimer of an alpha subunit and a beta subunit processed from the same precursor. The cofactor is Ca(2+).

It localises to the periplasm. It catalyses the reaction a penicillin + H2O = 6-aminopenicillanate + a carboxylate. This is Penicillin G acylase (pac) from Escherichia coli.